A 174-amino-acid chain; its full sequence is NADH-ubiquinone oxidoreductase chain 6 (174 aa).

Helical transmembrane passes span 4–24 (LIIM…KHPL), 25–45 (SMGL…GIYV), 48–68 (FWFS…LFIY), 82–102 (FNLT…FFII), and 143–163 (LITL…VKIT).

Belongs to the complex I subunit 6 family.

The protein localises to the mitochondrion membrane. The catalysed reaction is a ubiquinone + NADH + 5 H(+)(in) = a ubiquinol + NAD(+) + 4 H(+)(out). Functionally, core subunit of the mitochondrial membrane respiratory chain NADH dehydrogenase (Complex I) that is believed to belong to the minimal assembly required for catalysis. Complex I functions in the transfer of electrons from NADH to the respiratory chain. The immediate electron acceptor for the enzyme is believed to be ubiquinone. This is NADH-ubiquinone oxidoreductase chain 6 (ND6) from Anopheles quadrimaculatus (Common malaria mosquito).